The primary structure comprises 155 residues: Ribosomal RNA large subunit methyltransferase H (155 aa).

S-adenosyl-L-methionine is bound by residues L72, G103, and 122 to 127 (LSDLTL).

It belongs to the RNA methyltransferase RlmH family. In terms of assembly, homodimer.

It localises to the cytoplasm. It carries out the reaction pseudouridine(1915) in 23S rRNA + S-adenosyl-L-methionine = N(3)-methylpseudouridine(1915) in 23S rRNA + S-adenosyl-L-homocysteine + H(+). Specifically methylates the pseudouridine at position 1915 (m3Psi1915) in 23S rRNA. This chain is Ribosomal RNA large subunit methyltransferase H, found in Polaromonas naphthalenivorans (strain CJ2).